The chain runs to 423 residues: Glutamate-1-semialdehyde 2,1-aminomutase (423 aa).

Lysine 259 is modified (N6-(pyridoxal phosphate)lysine).

Belongs to the class-III pyridoxal-phosphate-dependent aminotransferase family. HemL subfamily. In terms of assembly, homodimer. Requires pyridoxal 5'-phosphate as cofactor.

It localises to the cytoplasm. The catalysed reaction is (S)-4-amino-5-oxopentanoate = 5-aminolevulinate. Its pathway is porphyrin-containing compound metabolism; protoporphyrin-IX biosynthesis; 5-aminolevulinate from L-glutamyl-tRNA(Glu): step 2/2. This chain is Glutamate-1-semialdehyde 2,1-aminomutase, found in Thermosipho africanus (strain TCF52B).